A 448-amino-acid polypeptide reads, in one-letter code: ATP synthase subunit b-delta (448 aa).

Residues 1-168 (MSTFIGQLIG…GSVGAAKRPV (168 aa)) form an ATP synthase subunit b region. Residues 4-24 (FIGQLIGFAVIVFLVVKYVVP) form a helical membrane-spanning segment. An ATP synthase subunit delta region spans residues 169–448 (PGGYSGMHAA…LSAAALHLPN (280 aa)).

This sequence in the N-terminal section; belongs to the ATPase B chain family. The protein in the C-terminal section; belongs to the ATPase delta chain family. F-type ATPases have 2 components, F(1) - the catalytic core - and F(0) - the membrane proton channel. F(1) has five subunits: alpha(3), beta(3), gamma(1), delta(1), epsilon(1). F(0) has three main subunits: a(1), b(2) and c(10-14). The alpha and beta chains form an alternating ring which encloses part of the gamma chain. F(1) is attached to F(0) by a central stalk formed by the gamma and epsilon chains, while a peripheral stalk is formed by the delta and b chains.

It is found in the cell membrane. In terms of biological role, f(1)F(0) ATP synthase produces ATP from ADP in the presence of a proton or sodium gradient. F-type ATPases consist of two structural domains, F(1) containing the extramembraneous catalytic core and F(0) containing the membrane proton channel, linked together by a central stalk and a peripheral stalk. During catalysis, ATP synthesis in the catalytic domain of F(1) is coupled via a rotary mechanism of the central stalk subunits to proton translocation. Its function is as follows. This fusion protein includes a component of the F(0) channel (subunit b) and of the F(1) subunit (subunit delta). Two copies of subunit b and one of delta together form the peripheral 'stator' stalk which links F(1) to F(0). The polypeptide is ATP synthase subunit b-delta (atpFH) (Mycobacteroides abscessus (strain ATCC 19977 / DSM 44196 / CCUG 20993 / CIP 104536 / JCM 13569 / NCTC 13031 / TMC 1543 / L948) (Mycobacterium abscessus)).